A 429-amino-acid chain; its full sequence is 4-hydroxyphenylacetate degradation bifunctional isomerase/decarboxylase (429 aa).

Approximate repeat units follow at residues 1–215 and 216–429; these read MKGT…NQTF and TWPL…ESAN. A divalent metal cation-binding residues include E276, E278, and D307.

It belongs to the FAH family. As to quaternary structure, monomer. Mg(2+) serves as cofactor.

The enzyme catalyses (2E,4Z)-5-hydroxypenta-2,4-diene-1,2,5-tricarboxylate = (3E,5R)-5-carboxy-2-oxohept-3-enedioate. The catalysed reaction is (3E,5R)-5-carboxy-2-oxohept-3-enedioate + H(+) = (4Z)-2-oxohept-4-enedioate + CO2. Its pathway is aromatic compound metabolism; 4-hydroxyphenylacetate degradation; pyruvate and succinate semialdehyde from 4-hydroxyphenylacetate: step 4/7. It functions in the pathway aromatic compound metabolism; 4-hydroxyphenylacetate degradation; pyruvate and succinate semialdehyde from 4-hydroxyphenylacetate: step 5/7. In terms of biological role, decarboxylates OPET (5-oxo-pent-3-ene-1,2,5-tricarboxylic acid) into HHDD (2-hydroxy-hept-2,4-diene-1,7-dioate) and isomerizes it to OHED (2-oxo-hept-3-ene-1,7-dioate). The protein is 4-hydroxyphenylacetate degradation bifunctional isomerase/decarboxylase (hpaG) of Salmonella dublin.